The chain runs to 88 residues: Large ribosomal subunit protein eL37 (88 aa).

A disordered region spans residues 1–24; sequence MTKGTTSFGKRHNKSHTQCRRCGR. Over residues 9–24 the composition is skewed to basic residues; it reads GKRHNKSHTQCRRCGR. Residues Cys19, Cys22, Cys34, and Cys37 each coordinate Zn(2+). A C4-type zinc finger spans residues 19–37; that stretch reads CRRCGRKSYHIQKKTCSSC.

The protein belongs to the eukaryotic ribosomal protein eL37 family. Zn(2+) serves as cofactor.

In terms of biological role, binds to the 23S rRNA. The sequence is that of Large ribosomal subunit protein eL37 (RPL37) from Schistosoma mansoni (Blood fluke).